The primary structure comprises 224 residues: Small ribosomal subunit protein uS3c (224 aa).

The region spanning I43 to K124 is the KH type-2 domain.

It belongs to the universal ribosomal protein uS3 family. As to quaternary structure, part of the 30S ribosomal subunit.

Its subcellular location is the plastid. The protein localises to the chloroplast. The chain is Small ribosomal subunit protein uS3c (rps3) from Saccharum hybrid (Sugarcane).